A 599-amino-acid polypeptide reads, in one-letter code: Elongation factor 4 (599 aa).

The 183-residue stretch at 2-184 (KNIRNFSIIA…EIVAKIPAPK (183 aa)) folds into the tr-type G domain. Residues 14–19 (DHGKST) and 131–134 (NKID) contribute to the GTP site.

This sequence belongs to the TRAFAC class translation factor GTPase superfamily. Classic translation factor GTPase family. LepA subfamily.

The protein resides in the cell inner membrane. The catalysed reaction is GTP + H2O = GDP + phosphate + H(+). Functionally, required for accurate and efficient protein synthesis under certain stress conditions. May act as a fidelity factor of the translation reaction, by catalyzing a one-codon backward translocation of tRNAs on improperly translocated ribosomes. Back-translocation proceeds from a post-translocation (POST) complex to a pre-translocation (PRE) complex, thus giving elongation factor G a second chance to translocate the tRNAs correctly. Binds to ribosomes in a GTP-dependent manner. This chain is Elongation factor 4, found in Mannheimia succiniciproducens (strain KCTC 0769BP / MBEL55E).